The following is a 700-amino-acid chain: Polyribonucleotide nucleotidyltransferase (700 aa).

Mg(2+) is bound by residues Asp484 and Asp490. The KH domain occupies 551 to 610 (PRVIRMVVDPEKIREIIGPGGKTISKIIAETGVKIDIEEDGRLYITASDLRSGERAKQMI). The S1 motif domain occupies 620–688 (GEIYLGKVLR…KLGRISLSRK (69 aa)).

It belongs to the polyribonucleotide nucleotidyltransferase family. It depends on Mg(2+) as a cofactor.

Its subcellular location is the cytoplasm. It carries out the reaction RNA(n+1) + phosphate = RNA(n) + a ribonucleoside 5'-diphosphate. Involved in mRNA degradation. Catalyzes the phosphorolysis of single-stranded polyribonucleotides processively in the 3'- to 5'-direction. This Thermoanaerobacter pseudethanolicus (strain ATCC 33223 / 39E) (Clostridium thermohydrosulfuricum) protein is Polyribonucleotide nucleotidyltransferase.